The primary structure comprises 625 residues: Sphingomyelin phosphodiesterase (625 aa).

Positions 1-20 are disordered; sequence MPRHGVSPGQGLPRSGREQA. The signal sequence occupies residues 1–40; sequence MPRHGVSPGQGLPRSGREQASDRSLGAPCLRLLWLGLALA. The Saposin B-type domain occupies 81 to 165; the sequence is WNLTCPTCKG…LLGSSCGHWD (85 aa). Asn82 carries N-linked (GlcNAc...) asparagine glycosylation. Disulfide bonds link Cys85-Cys161, Cys88-Cys153, and Cys116-Cys127. Asn171 carries N-linked (GlcNAc...) asparagine glycosylation. Asp202 and His204 together coordinate Zn(2+). 2 cysteine pairs are disulfide-bonded: Cys217–Cys222 and Cys223–Cys246. Residues Asp274 and Asn314 each coordinate Zn(2+). N-linked (GlcNAc...) asparagine glycans are attached at residues Asn331 and Asn391. Cys381 and Cys427 form a disulfide bridge. 3 residues coordinate Zn(2+): His421, His453, and His455. Residue Asn499 is glycosylated (N-linked (GlcNAc...) asparagine). Residue Ser504 is modified to Phosphoserine. A glycan (N-linked (GlcNAc...) asparagine) is linked at Asn516. 2 cysteine pairs are disulfide-bonded: Cys580–Cys584 and Cys590–Cys603.

The protein belongs to the acid sphingomyelinase family. As to quaternary structure, monomer. Interacts with SORT1; the interaction is required for SMPD1 targeting to lysosomes. The cofactor is Zn(2+). Post-translationally, proteolytically processed. Mature lysosomal form arises from C-terminal proteolytic processing of pro-sphingomyelin phosphodiesterase. In terms of processing, both lysosomal and secreted forms are glycosylated but they show a differential pattern of glycosylation. Phosphorylated at Ser-504 by PRKCD upon stress stimuli. Phosphorylation is required for secretion. Post-translationally, this form is generated following cleavage by CASP7 in the extracellular milieu. It shows increased activity.

It localises to the lysosome. Its subcellular location is the lipid droplet. It is found in the secreted. The protein localises to the extracellular space. The enzyme catalyses a sphingomyelin + H2O = phosphocholine + an N-acylsphing-4-enine + H(+). It catalyses the reaction N-(octadecanoyl)-sphing-4-enine-1-phosphocholine + H2O = N-octadecanoylsphing-4-enine + phosphocholine + H(+). The catalysed reaction is a 1,2-diacyl-sn-glycero-3-phosphocholine + H2O = phosphocholine + a 1,2-diacyl-sn-glycerol + H(+). It carries out the reaction 1,2-dihexadecanoyl-sn-glycero-3-phosphocholine + H2O = 1,2-dihexadecanoyl-sn-glycerol + phosphocholine + H(+). With respect to regulation, hydrolysis of liposomal sphingomyelin is stimulated by incorporation of diacylglycerol (DAG), ceramide and free fatty acids into the liposomal membranes. Phosphatidylcholine hydrolysis is inhibited by incorporation of cholesterol, ceramide, DAG, monoacylglycerol and fatty acids. Converts sphingomyelin to ceramide. Exists as two enzymatic forms that arise from alternative trafficking of a single protein precursor, one that is targeted to the endolysosomal compartment, whereas the other is released extracellularly. However, in response to various forms of stress, lysosomal exocytosis may represent a major source of the secretory form. In terms of biological role, in the lysosomes, converts sphingomyelin to ceramide. Plays an important role in the export of cholesterol from the intraendolysosomal membranes. Also has phospholipase C activities toward 1,2-diacylglycerolphosphocholine and 1,2-diacylglycerolphosphoglycerol. Modulates stress-induced apoptosis through the production of ceramide. Its function is as follows. When secreted, modulates cell signaling with its ability to reorganize the plasma membrane by converting sphingomyelin to ceramide. Secreted form is increased in response to stress and inflammatory mediators such as IL1B, IFNG or TNF as well as upon infection with bacteria and viruses. Produces the release of ceramide in the outer leaflet of the plasma membrane playing a central role in host defense. Ceramide reorganizes these rafts into larger signaling platforms that are required to internalize bacteria, induce apoptosis and regulate the cytokine response in infected cells. In wounded cells, the lysosomal form is released extracellularly in the presence of Ca(2+) and promotes endocytosis and plasma membrane repair. Functionally, this form is generated following cleavage by CASP7 in the extracellular milieu in response to bacterial infection. It shows increased ability to convert sphingomyelin to ceramide and promotes plasma membrane repair. Plasma membrane repair by ceramide counteracts the action of gasdermin-D (GSDMD) perforin (PRF1) pores that are formed in response to bacterial infection. The sequence is that of Sphingomyelin phosphodiesterase (SMPD1) from Bos taurus (Bovine).